A 93-amino-acid chain; its full sequence is Small ribosomal subunit protein bS16 (93 aa).

This sequence belongs to the bacterial ribosomal protein bS16 family.

In Roseiflexus castenholzii (strain DSM 13941 / HLO8), this protein is Small ribosomal subunit protein bS16.